The chain runs to 208 residues: Uracil phosphoribosyltransferase (208 aa).

Residues Arg78, Arg103, and 130-138 contribute to the 5-phospho-alpha-D-ribose 1-diphosphate site; that span reads DPMLATGGS. Uracil-binding positions include Ile193 and 198–200; that span reads GDA. Residue Asp199 participates in 5-phospho-alpha-D-ribose 1-diphosphate binding.

This sequence belongs to the UPRTase family. Mg(2+) serves as cofactor.

It catalyses the reaction UMP + diphosphate = 5-phospho-alpha-D-ribose 1-diphosphate + uracil. It participates in pyrimidine metabolism; UMP biosynthesis via salvage pathway; UMP from uracil: step 1/1. Allosterically activated by GTP. Catalyzes the conversion of uracil and 5-phospho-alpha-D-ribose 1-diphosphate (PRPP) to UMP and diphosphate. The protein is Uracil phosphoribosyltransferase of Blochmanniella pennsylvanica (strain BPEN).